The primary structure comprises 558 residues: Formate--tetrahydrofolate ligase (558 aa).

66-73 (TPAGEGKT) is an ATP binding site.

Belongs to the formate--tetrahydrofolate ligase family.

It catalyses the reaction (6S)-5,6,7,8-tetrahydrofolate + formate + ATP = (6R)-10-formyltetrahydrofolate + ADP + phosphate. It participates in one-carbon metabolism; tetrahydrofolate interconversion. The sequence is that of Formate--tetrahydrofolate ligase from Neisseria meningitidis serogroup B (strain ATCC BAA-335 / MC58).